Here is a 426-residue protein sequence, read N- to C-terminus: Adenylosuccinate synthetase (426 aa).

Residues 13-19 (GDEGKGK) and 41-43 (GHT) each bind GTP. The active-site Proton acceptor is D14. Mg(2+) is bound by residues D14 and G41. IMP contacts are provided by residues 14–17 (DEGK), 39–42 (NAGH), T129, R143, Q224, T239, and R303. Residue H42 is the Proton donor of the active site. Position 299-305 (299-305 (TTTGRPR)) interacts with substrate. Residues R305, 331-333 (KLD), and 414-416 (GTG) each bind GTP.

It belongs to the adenylosuccinate synthetase family. In terms of assembly, homodimer. Requires Mg(2+) as cofactor.

The protein localises to the cytoplasm. The catalysed reaction is IMP + L-aspartate + GTP = N(6)-(1,2-dicarboxyethyl)-AMP + GDP + phosphate + 2 H(+). Its pathway is purine metabolism; AMP biosynthesis via de novo pathway; AMP from IMP: step 1/2. Plays an important role in the de novo pathway of purine nucleotide biosynthesis. Catalyzes the first committed step in the biosynthesis of AMP from IMP. The protein is Adenylosuccinate synthetase of Caldicellulosiruptor bescii (strain ATCC BAA-1888 / DSM 6725 / KCTC 15123 / Z-1320) (Anaerocellum thermophilum).